We begin with the raw amino-acid sequence, 216 residues long: Transmembrane emp24 domain-containing protein eca (216 aa).

The signal sequence occupies residues 1–20; sequence MRDQWICLALVLCALHSACG. The Lumenal segment spans residues 21-183; it reads LYFHISETER…RHTSESTNSR (163 aa). The 97-residue stretch at 30 to 126 folds into the GOLD domain; the sequence is RKCFIEEVPD…QLRVHLDIQV (97 aa). Positions 134-164 form a coiled coil; it reads ANVAQKEKLTELQLRIRQLLDQVEQITKEQN. A helical membrane pass occupies residues 184-203; the sequence is VLWWSLAQTVVLVCMGFWQM. Over 204–216 the chain is Cytoplasmic; the sequence is RHLKSFFEAKKLV. Positions 213-216 match the Prevents secretion from ER motif; the sequence is KKLV.

Belongs to the EMP24/GP25L family.

The protein localises to the endoplasmic reticulum membrane. Its function is as follows. Eca and bai are essential, though not redundant, for dorsoventral patterning of the embryo. Specifically required during early embryogenesis for the activity of maternal tkv, while the zygotic tkv is not affected. The polypeptide is Transmembrane emp24 domain-containing protein eca (Drosophila mojavensis (Fruit fly)).